Reading from the N-terminus, the 122-residue chain is MIQQESRLKVADNSGAREVLVIKVLGGSGRRYANIGDVVVATVKEATPGGVVKKGQVVKAVVVRTKRGVRRSDGSYIRFDENACVIIRDDKSPRGTRIFGPVARELRDKDFMKIISLAPEVI.

The protein belongs to the universal ribosomal protein uL14 family. Part of the 50S ribosomal subunit. Forms a cluster with proteins L3 and L19. In the 70S ribosome, L14 and L19 interact and together make contacts with the 16S rRNA in bridges B5 and B8.

Binds to 23S rRNA. Forms part of two intersubunit bridges in the 70S ribosome. The protein is Large ribosomal subunit protein uL14 of Geobacillus sp. (strain WCH70).